A 328-amino-acid chain; its full sequence is MIFSILEHILTHISFSVVSIVLTIYFLTLLVNLDEIIGFFDSSDKGIIITFFGITGLLLTRWIYSGHFPLSNLYESLIFLSWAFSIIHMVSYFNKKQQNKLNTITAPSVIFIQGFATSGLLNKMPQSAILVPALQSQWLMMHVSMMILGYGALLCGSLLSIALLVITFRKVGPTFWKKNIKKNFLLNELFSFDVLYYINERNSILLQQNINFSFSRNYYRYQLIQQLDFWSFRIISLGFIFLTVGILSGAVWANETWGSYWNWDPKETWAFITWTIFAIYLHIKTNRNVRGINSAIVALIGFILIWICYFGVNLLGIGLHSYGSFTSN.

8 consecutive transmembrane segments (helical) span residues 13–33 (ISFS…LVNL), 46–66 (GIII…IYSG), 73–93 (LYES…VSYF), 101–121 (LNTI…SGLL), 146–166 (MILG…LLVI), 234–254 (IISL…VWAN), 263–283 (WDPK…YLHI), and 295–315 (AIVA…VNLL).

This sequence belongs to the CcmF/CycK/Ccl1/NrfE/CcsA family. As to quaternary structure, may interact with Ccs1.

It localises to the plastid. Its subcellular location is the chloroplast thylakoid membrane. In terms of biological role, required during biogenesis of c-type cytochromes (cytochrome c6 and cytochrome f) at the step of heme attachment. The chain is Cytochrome c biogenesis protein CcsA from Arabidopsis thaliana (Mouse-ear cress).